The primary structure comprises 174 residues: Adenine phosphoribosyltransferase (174 aa).

This sequence belongs to the purine/pyrimidine phosphoribosyltransferase family. Homodimer.

The protein localises to the cytoplasm. The enzyme catalyses AMP + diphosphate = 5-phospho-alpha-D-ribose 1-diphosphate + adenine. It functions in the pathway purine metabolism; AMP biosynthesis via salvage pathway; AMP from adenine: step 1/1. Catalyzes a salvage reaction resulting in the formation of AMP, that is energically less costly than de novo synthesis. This Mycolicibacterium vanbaalenii (strain DSM 7251 / JCM 13017 / BCRC 16820 / KCTC 9966 / NRRL B-24157 / PYR-1) (Mycobacterium vanbaalenii) protein is Adenine phosphoribosyltransferase.